The primary structure comprises 270 residues: NAD kinase (270 aa).

The active-site Proton acceptor is Asp-45. Residues 45–46 (DG), 121–122 (NE), Arg-147, Asp-149, 160–165 (TAYSKS), and Ala-184 each bind NAD(+).

The protein belongs to the NAD kinase family. It depends on a divalent metal cation as a cofactor.

It localises to the cytoplasm. The catalysed reaction is NAD(+) + ATP = ADP + NADP(+) + H(+). Its function is as follows. Involved in the regulation of the intracellular balance of NAD and NADP, and is a key enzyme in the biosynthesis of NADP. Catalyzes specifically the phosphorylation on 2'-hydroxyl of the adenosine moiety of NAD to yield NADP. This is NAD kinase from Lactobacillus helveticus (strain DPC 4571).